Here is a 172-residue protein sequence, read N- to C-terminus: Large ribosomal subunit protein uL10 (172 aa).

The protein belongs to the universal ribosomal protein uL10 family. As to quaternary structure, part of the ribosomal stalk of the 50S ribosomal subunit. The N-terminus interacts with L11 and the large rRNA to form the base of the stalk. The C-terminus forms an elongated spine to which L12 dimers bind in a sequential fashion forming a multimeric L10(L12)X complex.

In terms of biological role, forms part of the ribosomal stalk, playing a central role in the interaction of the ribosome with GTP-bound translation factors. In Liberibacter africanus (Citrus greening disease), this protein is Large ribosomal subunit protein uL10 (rplJ).